Reading from the N-terminus, the 481-residue chain is NADH-quinone oxidoreductase subunit N (481 aa).

The next 14 membrane-spanning stretches (helical) occupy residues 11 to 31 (AYPEIFLLLMVCVVMLADLFA), 37 to 57 (YLAFYLSLLTLAGCALVTCGI), 74 to 94 (AMSDILKLLIYVTVAAVLIYS), 103 to 123 (LLKGEFFSLALFATLGMMVMV), 128 to 148 (LITLYLGLELLSLSLYAMVAL), 162 to 182 (FFVLGALASGFLLYGMSMLYG), 205 to 225 (IFIIGLVFVVAGIGFKLSAVP), 238 to 258 (PTAVTLFIGSAPKFAAFGFVM), 272 to 292 (WQGMLVLLAVASMAVGNIAAI), 300 to 320 (MLAYSTISHMGFVLLGFIAAG), 328 to 348 (MFYVIAYVLMTLGAFGIIMLV), 371 to 391 (LAFMMLLVMFSMAGIPPMIGF), 405 to 425 (GYIWLVVVAVMLSLIGAFYYL), and 457 to 477 (LAIILLGMFPQMLMGLSLSAI).

This sequence belongs to the complex I subunit 2 family. In terms of assembly, NDH-1 is composed of 14 different subunits. Subunits NuoA, H, J, K, L, M, N constitute the membrane sector of the complex.

The protein resides in the cell inner membrane. The catalysed reaction is a quinone + NADH + 5 H(+)(in) = a quinol + NAD(+) + 4 H(+)(out). NDH-1 shuttles electrons from NADH, via FMN and iron-sulfur (Fe-S) centers, to quinones in the respiratory chain. The immediate electron acceptor for the enzyme in this species is believed to be ubiquinone. Couples the redox reaction to proton translocation (for every two electrons transferred, four hydrogen ions are translocated across the cytoplasmic membrane), and thus conserves the redox energy in a proton gradient. The polypeptide is NADH-quinone oxidoreductase subunit N (Nitrosomonas europaea (strain ATCC 19718 / CIP 103999 / KCTC 2705 / NBRC 14298)).